The chain runs to 356 residues: 3-dehydroquinate synthase (356 aa).

NAD(+) contacts are provided by residues 106–110 (GVVGD), 130–131 (TT), Lys143, and Lys152. Zn(2+)-binding residues include Glu185, His248, and His265.

It belongs to the sugar phosphate cyclases superfamily. Dehydroquinate synthase family. Co(2+) is required as a cofactor. Requires Zn(2+) as cofactor. NAD(+) serves as cofactor.

It is found in the cytoplasm. It catalyses the reaction 7-phospho-2-dehydro-3-deoxy-D-arabino-heptonate = 3-dehydroquinate + phosphate. The protein operates within metabolic intermediate biosynthesis; chorismate biosynthesis; chorismate from D-erythrose 4-phosphate and phosphoenolpyruvate: step 2/7. In terms of biological role, catalyzes the conversion of 3-deoxy-D-arabino-heptulosonate 7-phosphate (DAHP) to dehydroquinate (DHQ). The chain is 3-dehydroquinate synthase from Thermoanaerobacter pseudethanolicus (strain ATCC 33223 / 39E) (Clostridium thermohydrosulfuricum).